The primary structure comprises 100 residues: Urease subunit gamma (100 aa).

This sequence belongs to the urease gamma subunit family. As to quaternary structure, heterotrimer of UreA (gamma), UreB (beta) and UreC (alpha) subunits. Three heterotrimers associate to form the active enzyme.

The protein localises to the cytoplasm. It catalyses the reaction urea + 2 H2O + H(+) = hydrogencarbonate + 2 NH4(+). It participates in nitrogen metabolism; urea degradation; CO(2) and NH(3) from urea (urease route): step 1/1. This Cupriavidus necator (strain ATCC 17699 / DSM 428 / KCTC 22496 / NCIMB 10442 / H16 / Stanier 337) (Ralstonia eutropha) protein is Urease subunit gamma.